The primary structure comprises 62 residues: Large ribosomal subunit protein bL28 (62 aa).

The tract at residues 1 to 23 (MGKQCYVTGRKASTGNRRSHALN) is disordered.

Belongs to the bacterial ribosomal protein bL28 family.

The sequence is that of Large ribosomal subunit protein bL28 from Staphylococcus carnosus (strain TM300).